The primary structure comprises 111 residues: Probable 4-amino-4-deoxy-L-arabinose-phosphoundecaprenol flippase subunit ArnE (111 aa).

3 helical membrane-spanning segments follow: residues L37–L57, Q65–F85, and L91–I111.

This sequence belongs to the ArnE family. In terms of assembly, heterodimer of ArnE and ArnF.

The protein resides in the cell inner membrane. The protein operates within bacterial outer membrane biogenesis; lipopolysaccharide biosynthesis. Its function is as follows. Translocates 4-amino-4-deoxy-L-arabinose-phosphoundecaprenol (alpha-L-Ara4N-phosphoundecaprenol) from the cytoplasmic to the periplasmic side of the inner membrane. This is Probable 4-amino-4-deoxy-L-arabinose-phosphoundecaprenol flippase subunit ArnE from Hamiltonella defensa subsp. Acyrthosiphon pisum (strain 5AT).